We begin with the raw amino-acid sequence, 145 residues long: Large ribosomal subunit protein bL17 (145 aa).

The protein belongs to the bacterial ribosomal protein bL17 family. In terms of assembly, part of the 50S ribosomal subunit. Contacts protein L32.

The chain is Large ribosomal subunit protein bL17 from Orientia tsutsugamushi (strain Boryong) (Rickettsia tsutsugamushi).